The primary structure comprises 592 residues: Putative uric acid sigma-54-dependent transcriptional regulator UacR (592 aa).

A PAS domain is found at 158 to 229 (ISKIFATMID…HMQHIVSWDD (72 aa)). Positions 272-502 (LVGECRVMRQ…LSNLMEYLVN (231 aa)) constitute a Sigma-54 factor interaction domain. ATP contacts are provided by residues 300 to 307 (GESGTGKE) and 364 to 373 (ANTGTLFLDE). Residues 567–585 (KQVADELGIGIATLYRKIK) constitute a DNA-binding region (H-T-H motif).

Functionally, essential for both formate-dependent and formate-independent uric acid degradation. May be directly involved in the transcription of uacF in response to hypoxanthine, xanthine, and uric acid. The protein is Putative uric acid sigma-54-dependent transcriptional regulator UacR of Escherichia coli (strain K12).